The chain runs to 750 residues: Serine/threonine-protein kinase GE16371 (750 aa).

2 Doublecortin domains span residues 159–245 (LRIK…VEYN) and 315–398 (RIVT…AEDF). The Protein kinase domain maps to 479-737 (YTLGKIIGDG…SEDILDHYWT (259 aa)). Residues 485–493 (IGDGNFAIV) and Lys-508 each bind ATP. Asp-600 acts as the Proton acceptor in catalysis.

Belongs to the protein kinase superfamily. CAMK Ser/Thr protein kinase family. CaMK subfamily.

The enzyme catalyses L-seryl-[protein] + ATP = O-phospho-L-seryl-[protein] + ADP + H(+). It catalyses the reaction L-threonyl-[protein] + ATP = O-phospho-L-threonyl-[protein] + ADP + H(+). This Drosophila yakuba (Fruit fly) protein is Serine/threonine-protein kinase GE16371.